The chain runs to 302 residues: Acetyl-coenzyme A carboxylase carboxyl transferase subunit beta (302 aa).

The CoA carboxyltransferase N-terminal domain maps to 25 to 294; sequence VWTKCDSCGQ…PHFDEAAPVS (270 aa). Residues cysteine 29, cysteine 32, cysteine 48, and cysteine 51 each contribute to the Zn(2+) site. The C4-type zinc finger occupies 29-51; sequence CDSCGQVLYRAELERNLEVCPKC. The segment at 281 to 302 is disordered; the sequence is NQPQPHFDEAAPVSEQENQADA.

The protein belongs to the AccD/PCCB family. In terms of assembly, acetyl-CoA carboxylase is a heterohexamer composed of biotin carboxyl carrier protein (AccB), biotin carboxylase (AccC) and two subunits each of ACCase subunit alpha (AccA) and ACCase subunit beta (AccD). The cofactor is Zn(2+).

It is found in the cytoplasm. The enzyme catalyses N(6)-carboxybiotinyl-L-lysyl-[protein] + acetyl-CoA = N(6)-biotinyl-L-lysyl-[protein] + malonyl-CoA. It functions in the pathway lipid metabolism; malonyl-CoA biosynthesis; malonyl-CoA from acetyl-CoA: step 1/1. In terms of biological role, component of the acetyl coenzyme A carboxylase (ACC) complex. Biotin carboxylase (BC) catalyzes the carboxylation of biotin on its carrier protein (BCCP) and then the CO(2) group is transferred by the transcarboxylase to acetyl-CoA to form malonyl-CoA. In Serratia proteamaculans (strain 568), this protein is Acetyl-coenzyme A carboxylase carboxyl transferase subunit beta.